We begin with the raw amino-acid sequence, 235 residues long: MERLATRSSHDDPYSRSSLPTSNAINSNHESNGSTFSYVQSLRRAKATVWSDIGRVAPLHSSPSIKSSSQNGKSSSKGLGGMRSRVFSSQHHGVYHTRPASLHSRTMAPQHTILTPRLSATEGKDDDEDELVISTSNTAPTYISMIESSRASSTHSGTAPSIMGMSIHSRADSRAETTQSDGFESRSGSPTHDIQSYLVNRRSSSSESSDEDSAEEGMKRLVITNMGDNDEFDSD.

Residues Met1–Tyr14 are compositionally biased toward basic and acidic residues. Disordered regions lie at residues Met1 to Ser34, Pro58 to Arg83, and Ser169 to Asp235. Over residues Ser15–Ser34 the composition is skewed to polar residues. A compositionally biased stretch (low complexity) spans Ser61 to Lys77. Polar residues predominate over residues Glu176–Arg202. 3 positions are modified to phosphoserine: Ser180, Ser187, and Ser189. Thr191 carries the post-translational modification Phosphothreonine.

It is found in the cytoplasm. The protein resides in the nucleus. Functionally, involved in sporulation and has a role in meiosis. The sequence is that of Meiotically up-regulated gene 123 protein (mug123) from Schizosaccharomyces pombe (strain 972 / ATCC 24843) (Fission yeast).